We begin with the raw amino-acid sequence, 117 residues long: Bomanin Bicipital 1 (117 aa).

A signal peptide spans 1–20 (MKCLILSFAIFVVLASQATA). 2 cysteine pairs are disulfide-bonded: cysteine 29–cysteine 32 and cysteine 107–cysteine 110.

The protein belongs to the bomanin family. Hemolymph (at protein level).

It is found in the secreted. Its function is as follows. Secreted immune-induced peptide induced by Toll signaling. Has a role in resistance to bacterial and fungal infections. The polypeptide is Bomanin Bicipital 1 (Drosophila melanogaster (Fruit fly)).